The primary structure comprises 583 residues: Torsin-1A-interacting protein 1 (583 aa).

Basic and acidic residues predominate over residues 1–12; sequence MAGDGRRAEAVR. Disordered regions lie at residues 1-254 and 271-293; these read MAGD…RSSS and AHDK…WAPQ. Topologically, residues 1–338 are nuclear; that stretch reads MAGDGRRAEA…NASFVKRNRW (338 aa). Serine 60 is modified (phosphoserine). Basic and acidic residues-rich tracts occupy residues 74 to 101 and 115 to 124; these read VAKE…EVRE and RPQETEEMKT. Residues serine 135 and serine 143 each carry the phosphoserine modification. Methionine sulfoxide is present on methionine 146. Phosphoserine occurs at positions 154, 156, and 157. The segment covering 165–174 has biased composition (polar residues); sequence QTDLSQTISK. A phosphoserine mark is found at serine 186 and serine 215. The segment covering 216–225 has biased composition (acidic residues); the sequence is EEGETEEDDQ. Threonine 220 is modified (phosphothreonine). Phosphoserine is present on residues serine 227, serine 230, and serine 242. Basic and acidic residues predominate over residues 238-250; it reads RSRDSDESGDKTT. The segment covering 277–287 has biased composition (polar residues); sequence SVLSSGYQKTP. Methionine 301 bears the Methionine sulfoxide mark. The residue at position 305 (serine 305) is a Phosphoserine. Lysine 308 is covalently cross-linked (Glycyl lysine isopeptide (Lys-Gly) (interchain with G-Cter in SUMO2)). Phosphoserine is present on residues serine 309 and serine 315. Residues 309–328 are disordered; it reads SELGNQSPSTSSRQVTGQPQ. The chain crosses the membrane as a helical span at residues 339–355; the sequence is WLLPLIAALASGSFWFF. The Perinuclear space portion of the chain corresponds to 356–583; the sequence is STPEVETTAV…ENALKRGICL (228 aa). Residues 356-583 form an interaction with TOR1A region; that stretch reads STPEVETTAV…ENALKRGICL (228 aa). Residues 359–435 adopt a coiled-coil conformation; the sequence is EVETTAVQEF…SEQIADAYSS (77 aa). Asparagine 399 carries N-linked (GlcNAc...) asparagine glycosylation. Methionine sulfoxide is present on methionine 552.

This sequence belongs to the TOR1AIP family. In terms of assembly, interacts with ATP1B4. Interacts with TOR1A (ATP-bound). Interacts with TOR1B, TOR2A and TOR3A. Interacts with VIM. In terms of processing, phosphorylated. Dephosphorylated at Ser-309 and Ser-315 by serine/threonine-protein phosphatase PP1. As to expression, expressed in muscle, liver and kidney. In terms of tissue distribution, major isoform present in liver, brain and heart (at protein level). Expressed at lower levels than isoform 4 in lung, kidney and spleen (at protein level). Similar levels of isoforms 1 and 4 are observed in ovary, testis and pancreas (at protein level). Expressed at higher levels than isoform 1 in lung, kidney and spleen (at protein level). Expressed at lower levels than isoform 1 in liver, brain and heart (at protein level). Similar levels of isoforms 1 and 4 are observed in ovary, testis and pancreas (at protein level).

The protein resides in the nucleus inner membrane. The protein localises to the nucleus envelope. Its subcellular location is the nucleus. Required for nuclear membrane integrity. Induces TOR1A and TOR1B ATPase activity and is required for their location on the nuclear membrane. Binds to A- and B-type lamins. Possible role in membrane attachment and assembly of the nuclear lamina. This is Torsin-1A-interacting protein 1 (TOR1AIP1) from Homo sapiens (Human).